The chain runs to 803 residues: Protein translocase subunit SecA (803 aa).

Residues glutamine 100, 118-122 (GEGKT), and aspartate 508 each bind ATP.

Belongs to the SecA family. In terms of assembly, monomer and homodimer. Part of the essential Sec protein translocation apparatus which comprises SecA, SecYEG and auxiliary proteins SecDF. Other proteins may also be involved.

It is found in the cell membrane. It localises to the cytoplasm. It catalyses the reaction ATP + H2O + cellular proteinSide 1 = ADP + phosphate + cellular proteinSide 2.. In terms of biological role, part of the Sec protein translocase complex. Interacts with the SecYEG preprotein conducting channel. Has a central role in coupling the hydrolysis of ATP to the transfer of proteins into and across the cell membrane, serving as an ATP-driven molecular motor driving the stepwise translocation of polypeptide chains across the membrane. The polypeptide is Protein translocase subunit SecA (Leuconostoc mesenteroides subsp. mesenteroides (strain ATCC 8293 / DSM 20343 / BCRC 11652 / CCM 1803 / JCM 6124 / NCDO 523 / NBRC 100496 / NCIMB 8023 / NCTC 12954 / NRRL B-1118 / 37Y)).